Here is a 741-residue protein sequence, read N- to C-terminus: Lamin-B receptor (741 aa).

The segment at 29 to 126 (RLRRPRRTED…TGSGSGSSLP (98 aa)) is disordered. 2 stretches are compositionally biased toward low complexity: residues 57–84 (TRRT…RTRA) and 109–126 (PRSS…SSLP). A Phosphoserine modification is found at serine 111. At threonine 135 the chain carries Phosphothreonine. Serine 144 carries the phosphoserine modification. The span at 160 to 184 (TNTSSGAPNKAFNTSSVNSGNSFSR) shows a compositional bias: polar residues. A disordered region spans residues 160 to 194 (TNTSSGAPNKAFNTSSVNSGNSFSRTTTSSTTTTT). Residues 185–194 (TTTSSTTTTT) are compositionally biased toward low complexity. A phosphoserine mark is found at serine 223 and serine 225. The span at 231–240 (LAGTPVTNTE) shows a compositional bias: polar residues. A disordered region spans residues 231-277 (LAGTPVTNTEEGSRYSRSVSRSVYDDEKSSKRSYSTGEEDIDEEDEL). Threonine 234 and threonine 237 each carry phosphothreonine. Residues serine 243, serine 246, serine 248, serine 250, and serine 263 each carry the phosphoserine modification. Threonine 266 bears the Phosphothreonine mark. Residues 267–277 (GEEDIDEEDEL) are compositionally biased toward acidic residues. Serine 284 bears the Phosphoserine mark. Threonine 288 carries the phosphothreonine modification. Serine 291 is subject to Phosphoserine. Threonine 293 is subject to Phosphothreonine. At serine 298 the chain carries Phosphoserine. Transmembrane regions (helical) follow at residues 308–328 (FGGW…VYYL), 363–383 (VVGA…LLPG), 402–422 (LTLL…VTFV), 429–449 (FCIF…WLVD), 497–517 (LSLV…LVWP), 543–563 (PATL…IIFE), 577–599 (YGCL…TKYF), and 604–624 (VPIS…LGLL). Phosphoserine occurs at positions 640 and 642. A helical transmembrane segment spans residues 687 to 707 (MALRPAWPPVLGLSLIILLLL).

It belongs to the ERG4/ERG24 family. Interacts directly with LAM.

The protein localises to the nucleus inner membrane. Anchors the lamina and the heterochromatin to the inner nuclear membrane. In Drosophila melanogaster (Fruit fly), this protein is Lamin-B receptor.